A 203-amino-acid polypeptide reads, in one-letter code: MDAMAVTMTIIAYLLGSISSAVLICRVLRLPDPRGVGSNNPGATNVLRIGGKGAAAAVLLCDMLKGTIPVWSAYYLGIEPVLLGVIAIAACLGHMYPLFFHFQGGKGVATALGAIAPIGLDLTGMIMATWLLVAILFRYSSLAALVTVLLAPMYTWMIKPQYTLPVGMLCCLIVLRHHQNIRRLFTGEEPKIGEKKLQMPKSQ.

4 consecutive transmembrane segments (helical) span residues 4–24, 80–100, 117–137, and 139–159; these read MAVT…AVLI, PVLL…PLFF, PIGL…AILF, and YSSL…WMIK.

It belongs to the PlsY family. As to quaternary structure, probably interacts with PlsX.

It localises to the cell inner membrane. The enzyme catalyses an acyl phosphate + sn-glycerol 3-phosphate = a 1-acyl-sn-glycero-3-phosphate + phosphate. Its pathway is lipid metabolism; phospholipid metabolism. Catalyzes the transfer of an acyl group from acyl-phosphate (acyl-PO(4)) to glycerol-3-phosphate (G3P) to form lysophosphatidic acid (LPA). This enzyme utilizes acyl-phosphate as fatty acyl donor, but not acyl-CoA or acyl-ACP. This chain is Glycerol-3-phosphate acyltransferase, found in Vibrio vulnificus (strain YJ016).